Consider the following 420-residue polypeptide: Glycerol-3-phosphate dehydrogenase [NAD(+)] (420 aa).

Residues 16 to 21 (GSGNWG), Phe48, and Phe119 contribute to the NAD(+) site. Residue Lys142 coordinates substrate. Residue Ala175 participates in NAD(+) binding. The disordered stretch occupies residues 190–217 (YDPPPMDNSRAPTPRSNSPANGNGIAPL). Residues 199-210 (RAPTPRSNSPAN) show a composition bias toward polar residues. The active-site Proton acceptor is Lys278. NAD(+) is bound by residues Arg344 and Gln373. Substrate is bound at residue 344–345 (RN).

This sequence belongs to the NAD-dependent glycerol-3-phosphate dehydrogenase family.

It catalyses the reaction sn-glycerol 3-phosphate + NAD(+) = dihydroxyacetone phosphate + NADH + H(+). This Colletotrichum gloeosporioides (Anthracnose fungus) protein is Glycerol-3-phosphate dehydrogenase [NAD(+)].